We begin with the raw amino-acid sequence, 305 residues long: Tyrosine recombinase XerC (305 aa).

Residues 2-88 form the Core-binding (CB) domain; the sequence is TNKQRLVHLF…ALRSFYKFLL (87 aa). The Tyr recombinase domain occupies 109–295; sequence RIPSFLYEEE…SKDSLRKTYM (187 aa). Active-site residues include arginine 149, lysine 173, histidine 247, arginine 250, and histidine 273. The active-site O-(3'-phospho-DNA)-tyrosine intermediate is the tyrosine 282.

Belongs to the 'phage' integrase family. XerC subfamily. In terms of assembly, forms a cyclic heterotetrameric complex composed of two molecules of XerC and two molecules of XerD.

The protein localises to the cytoplasm. Site-specific tyrosine recombinase, which acts by catalyzing the cutting and rejoining of the recombining DNA molecules. The XerC-XerD complex is essential to convert dimers of the bacterial chromosome into monomers to permit their segregation at cell division. It also contributes to the segregational stability of plasmids. This chain is Tyrosine recombinase XerC, found in Bacillus pumilus (strain SAFR-032).